The following is a 199-amino-acid chain: Recombination protein RecR (199 aa).

The C4-type zinc-finger motif lies at 58-73; it reads CSRCFYFTEEDPCPLC. The region spanning 81 to 176 is the Toprim domain; sequence QLICVVEEPQ…KVTRLAHGIP (96 aa).

The protein belongs to the RecR family.

Functionally, may play a role in DNA repair. It seems to be involved in an RecBC-independent recombinational process of DNA repair. It may act with RecF and RecO. This Syntrophotalea carbinolica (strain DSM 2380 / NBRC 103641 / GraBd1) (Pelobacter carbinolicus) protein is Recombination protein RecR.